A 395-amino-acid chain; its full sequence is F-box/LRR-repeat protein 12 (395 aa).

One can recognise an F-box domain in the interval 13–61 (TSIIHLPDDCLSFIFQRLDSVADHDSFGLTCHRWLNIQNISRRSLQFQC). LRR repeat units follow at residues 75 to 100 (NPDVSSHHLHRLLTRFQWLEHLSLSG), 101 to 126 (CTVLNDSSLDSLRYPGARLHTLYLDC), 127 to 152 (CFGISDDGISTIASFCPNLSVVSLYR), 154 to 177 (NISDIGLETLARASLSLKCVNLSY), 178 to 203 (CPLVSDFGIKALSQACLQLESVKISN), 226 to 250 (SCQLEPKGITGIISGGGIEFLNISG), 252 to 278 (SCYIRKDGLVPIGSGIASKLRILNLRM), 279 to 304 (CRTVGDESIEAIAKGCPLLQEWNLAL), 305 to 330 (CHEVKISGWEAVGKWCRNLKKLHVNR), and 331 to 356 (CRNLCDQGLLALRCGCMNLQILYMNG).

The polypeptide is F-box/LRR-repeat protein 12 (FBL12) (Arabidopsis thaliana (Mouse-ear cress)).